We begin with the raw amino-acid sequence, 275 residues long: Phosphonates import ATP-binding protein PhnC (275 aa).

Residues 2-246 enclose the ABC transporter domain; that stretch reads LKIENLTKRY…ALTEIYGEEE (245 aa). An ATP-binding site is contributed by 35 to 42; sequence GPSGAGKS.

Belongs to the ABC transporter superfamily. Phosphonates importer (TC 3.A.1.9.1) family. As to quaternary structure, the complex is composed of two ATP-binding proteins (PhnC), two transmembrane proteins (PhnE) and a solute-binding protein (PhnD).

Its subcellular location is the cell inner membrane. It catalyses the reaction phosphonate(out) + ATP + H2O = phosphonate(in) + ADP + phosphate + H(+). Functionally, part of the ABC transporter complex PhnCDE involved in phosphonates import. Responsible for energy coupling to the transport system. The protein is Phosphonates import ATP-binding protein PhnC of Wolinella succinogenes (strain ATCC 29543 / DSM 1740 / CCUG 13145 / JCM 31913 / LMG 7466 / NCTC 11488 / FDC 602W) (Vibrio succinogenes).